Reading from the N-terminus, the 125-residue chain is uncharacterized protein (125 aa).

This is an uncharacterized protein from Dictyostelium discoideum (Social amoeba).